Consider the following 320-residue polypeptide: Mitochondrial thiamine pyrophosphate carrier (320 aa).

3 Solcar repeats span residues 13–106 (NTKL…LTEL), 116–202 (REFS…LKHL), and 214–309 (NENL…FCNV). The helical transmembrane segment at 19–39 (AVAGSVSGLVTRALISPFDVI) threads the bilayer. Serine 51 is subject to Phosphoserine. Helical transmembrane passes span 87-107 (ILSIGYGAVQFLSFEMLTELV), 122-142 (FVCGGLAACTATLTVHPVDVL), 173-193 (VFYKGLAPTLIAIFPYAGLQF), and 220-240 (LLCGSGAGVISKTLTYPLDLF). Positions 241–246 (KKRLQV) match the Substrate recognition motif. Residues 293–313 (ALSTGFMFFWYEFFCNVFHCM) traverse the membrane as a helical segment.

Belongs to the mitochondrial carrier (TC 2.A.29) family.

Its subcellular location is the mitochondrion membrane. The enzyme catalyses thiamine phosphate(out) + thiamine diphosphate(in) = thiamine phosphate(in) + thiamine diphosphate(out). In terms of biological role, mitochondrial transporter mediating uptake of thiamine diphosphate into mitochondria. It is not clear if the antiporter activity is affected by the membrane potential or by the proton electrochemical gradient. The protein is Mitochondrial thiamine pyrophosphate carrier (SLC25A19) of Macaca fascicularis (Crab-eating macaque).